Here is a 356-residue protein sequence, read N- to C-terminus: C-X-C chemokine receptor type 2 (356 aa).

Residues 1-46 are Extracellular-facing; the sequence is MEYINWDNYSLEDLFGDIDNYTYNTEMPIIPADSAPCRPESLDINK. 2 N-linked (GlcNAc...) asparagine glycosylation sites follow: N8 and N20. Residues 47 to 73 traverse the membrane as a helical segment; that stretch reads YAVVVIYVLVFVLNLLGNSLVIMVVLY. Residues 74–82 lie on the Cytoplasmic side of the membrane; that stretch reads SRVSHSVTD. Residues 83–103 traverse the membrane as a helical segment; the sequence is VYLLNLAIADLLFALTLPIWA. Residues 104–118 are Extracellular-facing; that stretch reads VSKVKGWIFGTPLCK. C117 and C194 are disulfide-bonded. The chain crosses the membrane as a helical span at residues 119-140; it reads IVSLLKEVNFYSGILLLASISM. Residues 141–161 are Cytoplasmic-facing; sequence DRYLAIVHATRRLTQKKHWVK. The chain crosses the membrane as a helical span at residues 162-181; sequence FICLGIWALSLILSLPIFVF. At 182–206 the chain is on the extracellular side; it reads RRAINPPYSSPVCYEDMGTNTTKLR. A helical membrane pass occupies residues 207-229; it reads IVMRALPQTFGFIVPLMIMLFCY. The Cytoplasmic portion of the chain corresponds to 230–249; it reads GLTLRTLFEAHMGQKHRAMR. A helical transmembrane segment spans residues 250-269; sequence VIFAVVLVFLLCWLPYNLVA. The Extracellular portion of the chain corresponds to 270-290; the sequence is DTLMRLQAIEETCQRRNDIGR. A helical membrane pass occupies residues 291–311; that stretch reads ALDATEILGFFHSCLNPLIYA. Over 312–356 the chain is Cytoplasmic; the sequence is FIGQKFRHGLLKIMAFHGLISKEYLPKDSRPSFVGSSSANTSTTF.

This sequence belongs to the G-protein coupled receptor 1 family. Interacts with IL8. Interacts with GNAI2. Post-translationally, phosphorylated upon ligand binding; which is required for desensitization.

Its subcellular location is the cell membrane. In terms of biological role, receptor for interleukin-8 which is a powerful neutrophil chemotactic factor. Binding of IL-8 to the receptor causes activation of neutrophils. This response is mediated via a G-protein that activates a phosphatidylinositol-calcium second messenger system. Binds to IL-8 with high affinity. Also binds with high affinity to CXCL3, GRO/MGSA and NAP-2. The chain is C-X-C chemokine receptor type 2 (CXCR2) from Canis lupus familiaris (Dog).